Here is a 494-residue protein sequence, read N- to C-terminus: Gram-negative bacteria-binding protein 1 (494 aa).

The first 19 residues, 1–19, serve as a signal peptide directing secretion; that stretch reads MPGLCIGILLLIGFGCTTA. In terms of domain architecture, CBM39 spans 20–120; the sequence is YKIPTPTVEL…QPLPVCNLGG (101 aa). N-linked (GlcNAc...) asparagine glycosylation is found at N56 and N81. Positions 126–160 are disordered; that stretch reads GCSPGDDDFTDDNQLSTEDSALEPTAPSVCEPSES. Positions 135–494 constitute a GH16 domain; the sequence is TDDNQLSTED…DYVRVFATDN (360 aa). N185 is a glycosylation site (N-linked (GlcNAc...) asparagine).

It belongs to the insect beta-1,3-glucan binding protein family.

It is found in the cell membrane. Its function is as follows. Plays a key role in innate immunity by acting as a pattern recognition receptor for beta-1,3-glucan from fungi and lipopolysaccharide from Gram-negative bacteria. Upon recognition of invading microorganism-derived products, acts upstream of protease spz processing enzyme SPE to activate the Toll pathway and to induce the expression of antimicrobial peptides drosomycin, cecropin and attacin. The sequence is that of Gram-negative bacteria-binding protein 1 from Drosophila melanogaster (Fruit fly).